A 127-amino-acid polypeptide reads, in one-letter code: Large-conductance mechanosensitive channel (127 aa).

A run of 3 helical transmembrane segments spans residues 9–29, 32–52, and 75–95; these read EFAM…GVAF, IVTA…LGGI, and VIDF…INLL.

This sequence belongs to the MscL family. Homopentamer.

The protein resides in the cell inner membrane. Its function is as follows. Channel that opens in response to stretch forces in the membrane lipid bilayer. May participate in the regulation of osmotic pressure changes within the cell. The polypeptide is Large-conductance mechanosensitive channel (Legionella pneumophila (strain Paris)).